Consider the following 375-residue polypeptide: CC-adding tRNA nucleotidyltransferase (375 aa).

Position 27-30 (27-30 (GAVR)) interacts with CTP. The Mg(2+) site is built by Asp40 and Asp42. CTP-binding positions include 95–96 (RD), Asn100, 137–146 (DPLRMLRAPR), and Arg177.

The protein belongs to the tRNA nucleotidyltransferase/poly(A) polymerase family. It depends on Mg(2+) as a cofactor.

The catalysed reaction is a tRNA precursor + 2 CTP = a tRNA with a 3' CC end + 2 diphosphate. In terms of biological role, tRNA nucleotidyltransferase involved in the synthesis of the tRNA CCA terminus. Adds the two cytidine residues to tRNA. This chain is CC-adding tRNA nucleotidyltransferase, found in Halalkalibacterium halodurans (strain ATCC BAA-125 / DSM 18197 / FERM 7344 / JCM 9153 / C-125) (Bacillus halodurans).